The chain runs to 173 residues: NADH-ubiquinone oxidoreductase chain 6 (173 aa).

The next 6 membrane-spanning stretches (helical) occupy residues 1–21 (MTYFVLFLGLCFVLGGLAVAS), 27–47 (YGVVGLVLASIAGCGWLLSLG), 48–68 (VSFVSLVLFMVYLGGMLVVFV), 87–107 (VVGYGVSLITVLVVGVVVGGF), 113–133 (FGVITVDSVGMFSVRLDFGGV), and 139–159 (CGVGMFLVAGWGLLLTLFVVL).

Belongs to the complex I subunit 6 family.

The protein localises to the mitochondrion membrane. It carries out the reaction a ubiquinone + NADH + 5 H(+)(in) = a ubiquinol + NAD(+) + 4 H(+)(out). In terms of biological role, core subunit of the mitochondrial membrane respiratory chain NADH dehydrogenase (Complex I) that is believed to belong to the minimal assembly required for catalysis. Complex I functions in the transfer of electrons from NADH to the respiratory chain. The immediate electron acceptor for the enzyme is believed to be ubiquinone. The protein is NADH-ubiquinone oxidoreductase chain 6 (MT-ND6) of Alle alle (Dovekie).